Reading from the N-terminus, the 336-residue chain is Izumo sperm-egg fusion protein 1 (336 aa).

Positions 1-16 (MTLPILLGWFLTLCSS) are cleaved as a signal peptide. The 90-residue stretch at 158-247 (PPLDCGEHHL…LKDQKGTALS (90 aa)) folds into the Ig-like C2-type domain. A disulfide bond links Cys-179 and Cys-236. Residues 287-307 (SFLTVLILLTVLSITGSLIII) traverse the membrane as a helical segment.

This sequence belongs to the Izumo family. As to quaternary structure, forms a complex with tmem81 and spaca6 on spermatocyte cell membrane. The complex binds to oocyte protein bncr. In terms of tissue distribution, expressed in sperm.

The protein resides in the cell membrane. Its subcellular location is the cytoplasmic vesicle. The protein localises to the secretory vesicle. It is found in the acrosome membrane. Its function is as follows. Essential sperm cell-surface protein required for fertilization by acting as a ligand for bncr receptor on egg. The interaction of the complex izumo1:spaca6:tmemt81 with bncr is a necessary adhesion event between sperm and egg that is required for fertilization. The polypeptide is Izumo sperm-egg fusion protein 1 (Danio rerio (Zebrafish)).